Consider the following 304-residue polypeptide: L-threonate dehydrogenase (304 aa).

NAD(+) is bound by residues 7 to 35 (YAVAVIGLGSMGFGAAASCINAGLTTYGV) and Thr102. Residue Lys178 is part of the active site. Residue Lys246 coordinates NAD(+).

Belongs to the HIBADH-related family. L-threonate dehydrogenase subfamily.

The catalysed reaction is L-threonate + NAD(+) = 2-dehydro-L-erythronate + NADH + H(+). Functionally, catalyzes oxidation of L-threonate to 2-oxo-tetronate. Can use either NAD(+) or NADP(+) as cosubstrate, with a preference for NAD(+). This Pectobacterium atrosepticum (strain SCRI 1043 / ATCC BAA-672) (Erwinia carotovora subsp. atroseptica) protein is L-threonate dehydrogenase.